We begin with the raw amino-acid sequence, 583 residues long: Pectinesterase/pectinesterase inhibitor U1 (583 aa).

Residues 1-40 form the signal peptide; the sequence is MTRVEDFFSKQIDFCKRKKKIYLAIVASVLLVAAVIGVVA. The segment at 60–221 is pectinesterase inhibitor U1; sequence SSAHAIVKSA…EKMCSNALAM (162 aa). 3 N-linked (GlcNAc...) asparagine glycosylation sites follow: Asn-85, Asn-105, and Asn-224. A pectinesterase U1 region spans residues 272–570; sequence DVVVAADGSG…TPGRFIAGGS (299 aa). 2 residues coordinate substrate: Thr-347 and Gln-377. Asp-400 (proton donor; for pectinesterase activity) is an active-site residue. Cys-414 and Cys-434 are oxidised to a cystine. Catalysis depends on Asp-421, which acts as the Nucleophile; for pectinesterase activity. Arg-489 and Trp-491 together coordinate substrate.

It in the N-terminal section; belongs to the PMEI family. This sequence in the C-terminal section; belongs to the pectinesterase family.

It is found in the secreted. Its subcellular location is the cell wall. It carries out the reaction [(1-&gt;4)-alpha-D-galacturonosyl methyl ester](n) + n H2O = [(1-&gt;4)-alpha-D-galacturonosyl](n) + n methanol + n H(+). The protein operates within glycan metabolism; pectin degradation; 2-dehydro-3-deoxy-D-gluconate from pectin: step 1/5. In terms of biological role, acts in the modification of cell walls via demethylesterification of cell wall pectin. The polypeptide is Pectinesterase/pectinesterase inhibitor U1 (PMEU1) (Solanum lycopersicum (Tomato)).